The chain runs to 529 residues: [Pyruvate dehydrogenase [acetyl-transferring]]-phosphatase 2, mitochondrial (529 aa).

The transit peptide at 1 to 66 directs the protein to the mitochondrion; that stretch reads MSSTVSYWIL…FTLCKAYRHT (66 aa). The PPM-type phosphatase domain occupies 106 to 517; the sequence is VLRFESNQLA…DDITVTVVYF (412 aa). Positions 141, 142, 412, and 508 each coordinate Mn(2+).

This sequence belongs to the PP2C family. Requires Mg(2+) as cofactor.

It localises to the mitochondrion. It catalyses the reaction O-phospho-L-seryl-[pyruvate dehydrogenase E1 alpha subunit] + H2O = L-seryl-[pyruvate dehydrogenase E1 alpha subunit] + phosphate. Mitochondrial enzyme that catalyzes the dephosphorylation and concomitant reactivation of the alpha subunit of the E1 component of the pyruvate dehydrogenase complex (PDC), thereby stimulating the conversion of pyruvate into acetyl-CoA. Acts as a crucial regulator of T cell metabolism and function, with a particular focus on T-helper Th17. This Homo sapiens (Human) protein is [Pyruvate dehydrogenase [acetyl-transferring]]-phosphatase 2, mitochondrial.